Reading from the N-terminus, the 388-residue chain is Tryptophan synthase beta chain (388 aa).

K86 carries the post-translational modification N6-(pyridoxal phosphate)lysine.

The protein belongs to the TrpB family. As to quaternary structure, tetramer of two alpha and two beta chains. It depends on pyridoxal 5'-phosphate as a cofactor.

The enzyme catalyses (1S,2R)-1-C-(indol-3-yl)glycerol 3-phosphate + L-serine = D-glyceraldehyde 3-phosphate + L-tryptophan + H2O. The protein operates within amino-acid biosynthesis; L-tryptophan biosynthesis; L-tryptophan from chorismate: step 5/5. The beta subunit is responsible for the synthesis of L-tryptophan from indole and L-serine. This chain is Tryptophan synthase beta chain (trpB), found in Buchnera aphidicola subsp. Acyrthosiphon pisum (strain APS) (Acyrthosiphon pisum symbiotic bacterium).